The following is a 121-amino-acid chain: Large ribosomal subunit protein uL22 (121 aa).

This sequence belongs to the universal ribosomal protein uL22 family. In terms of assembly, part of the 50S ribosomal subunit.

Functionally, this protein binds specifically to 23S rRNA; its binding is stimulated by other ribosomal proteins, e.g. L4, L17, and L20. It is important during the early stages of 50S assembly. It makes multiple contacts with different domains of the 23S rRNA in the assembled 50S subunit and ribosome. The globular domain of the protein is located near the polypeptide exit tunnel on the outside of the subunit, while an extended beta-hairpin is found that lines the wall of the exit tunnel in the center of the 70S ribosome. The sequence is that of Large ribosomal subunit protein uL22 from Kocuria rhizophila (strain ATCC 9341 / DSM 348 / NBRC 103217 / DC2201).